A 177-amino-acid chain; its full sequence is Protein GrpE (177 aa).

Composition is skewed to basic and acidic residues over residues 1–19 (MAKH…KETV) and 29–41 (SPEK…ANER). The tract at residues 1–41 (MAKHKHEEHPEDVEVKETVETAEQAESASPEKSELELANER) is disordered.

The protein belongs to the GrpE family. As to quaternary structure, homodimer.

It is found in the cytoplasm. Functionally, participates actively in the response to hyperosmotic and heat shock by preventing the aggregation of stress-denatured proteins, in association with DnaK and GrpE. It is the nucleotide exchange factor for DnaK and may function as a thermosensor. Unfolded proteins bind initially to DnaJ; upon interaction with the DnaJ-bound protein, DnaK hydrolyzes its bound ATP, resulting in the formation of a stable complex. GrpE releases ADP from DnaK; ATP binding to DnaK triggers the release of the substrate protein, thus completing the reaction cycle. Several rounds of ATP-dependent interactions between DnaJ, DnaK and GrpE are required for fully efficient folding. This chain is Protein GrpE, found in Streptococcus gordonii (strain Challis / ATCC 35105 / BCRC 15272 / CH1 / DL1 / V288).